The following is a 172-amino-acid chain: Adenine phosphoribosyltransferase (172 aa).

It belongs to the purine/pyrimidine phosphoribosyltransferase family. Homodimer.

The protein resides in the cytoplasm. The catalysed reaction is AMP + diphosphate = 5-phospho-alpha-D-ribose 1-diphosphate + adenine. It functions in the pathway purine metabolism; AMP biosynthesis via salvage pathway; AMP from adenine: step 1/1. Catalyzes a salvage reaction resulting in the formation of AMP, that is energically less costly than de novo synthesis. In Trichormus variabilis (strain ATCC 29413 / PCC 7937) (Anabaena variabilis), this protein is Adenine phosphoribosyltransferase.